Consider the following 146-residue polypeptide: Hemoglobin subunit beta (146 aa).

Residues 2-146 (HWTAEEKQLI…VAHALARKYH (145 aa)) form the Globin domain. Heme b contacts are provided by His63 and His92.

Belongs to the globin family. As to quaternary structure, heterotetramer of two alpha chains and two beta chains. In terms of tissue distribution, red blood cells.

Involved in oxygen transport from the lung to the various peripheral tissues. This Branta canadensis (Canada goose) protein is Hemoglobin subunit beta (HBB).